The sequence spans 437 residues: ATP-dependent RNA helicase RhlB (437 aa).

Positions Q9–A37 match the Q motif motif. In terms of domain architecture, Helicase ATP-binding spans L40 to V219. A53–T60 contacts ATP. Residues D165–D168 carry the DEAD box motif. The Helicase C-terminal domain maps to R245–L390. The disordered stretch occupies residues A395–Q437. Residues Q400–R424 are compositionally biased toward low complexity. Basic residues predominate over residues N425–Q437.

It belongs to the DEAD box helicase family. RhlB subfamily. Component of the RNA degradosome, which is a multiprotein complex involved in RNA processing and mRNA degradation.

The protein resides in the cytoplasm. It catalyses the reaction ATP + H2O = ADP + phosphate + H(+). In terms of biological role, DEAD-box RNA helicase involved in RNA degradation. Has RNA-dependent ATPase activity and unwinds double-stranded RNA. This chain is ATP-dependent RNA helicase RhlB, found in Photobacterium profundum (strain SS9).